We begin with the raw amino-acid sequence, 209 residues long: Glycolipid transfer protein A (209 aa).

Tandem repeats lie at residues 45 to 55 (IKADITGNITK) and 56 to 66 (IRSVYESNPTK). The tract at residues 45 to 66 (IKADITGNITKIRSVYESNPTK) is 2 X 12 AA approximate tandem repeats. Residue 48–55 (DITGNITK) participates in beta-D-galactosyl-(1-&gt;4)-beta-D-glucosyl-(1&lt;-&gt;1)-N-[(9Z)-octadecenoyl]-sphing-4-enine binding. Beta-D-galactosyl-(1-&gt;4)-beta-D-glucosyl-(1&lt;-&gt;1)-N-[(9Z)-octadecenoyl]-sphing-4-enine contacts are provided by His140 and Tyr207.

Belongs to the GLTP family.

The protein resides in the cytoplasm. Functionally, accelerates the intermembrane transfer of various glycolipids. Catalyzes the transfer of various glycosphingolipids between membranes but does not catalyze the transfer of phospholipids. May be involved in the intracellular translocation of glucosylceramides. The sequence is that of Glycolipid transfer protein A (gltp-a) from Xenopus laevis (African clawed frog).